The primary structure comprises 491 residues: Cysteine--tRNA ligase (491 aa).

Zn(2+) is bound at residue Cys31. Positions 33 to 43 match the 'HIGH' region motif; that stretch reads PTVYGDAHLGH. Zn(2+)-binding residues include Cys226, His251, and Glu255. The 'KMSKS' region motif lies at 283-287; sequence KMGKS. Residue Lys286 participates in ATP binding.

This sequence belongs to the class-I aminoacyl-tRNA synthetase family. As to quaternary structure, monomer. Zn(2+) is required as a cofactor.

The protein localises to the cytoplasm. The enzyme catalyses tRNA(Cys) + L-cysteine + ATP = L-cysteinyl-tRNA(Cys) + AMP + diphosphate. The chain is Cysteine--tRNA ligase from Parabacteroides distasonis (strain ATCC 8503 / DSM 20701 / CIP 104284 / JCM 5825 / NCTC 11152).